We begin with the raw amino-acid sequence, 574 residues long: Transmembrane protein 108 (574 aa).

Residues 9 to 29 (YCQLLSFLLTLALTKALVLAV) traverse the membrane as a helical segment. The segment at 31–169 (EPSPRESLQT…ATTRRPPRPP (139 aa)) is interaction with SH3GL2. Disordered stretches follow at residues 32–352 (PSPR…SGVF) and 364–417 (DATV…PRPL). The segment covering 58–86 (TRLSSVLTLNPTPDGPSSQAAATLETTVS) has biased composition (polar residues). Residues 132-160 (LPPGDATPTTTLPTKPAGTTSRPTVAPRA) are compositionally biased toward low complexity. The interval 173–406 (RKGAGGSTRT…SPAEEEAEAS (234 aa)) is interaction with DST (isoform 1). A compositionally biased stretch (polar residues) spans 245–271 (FSSTQPQTVSPATAPRSTSRVPPTTSL). A compositionally biased stretch (low complexity) spans 292 to 312 (TSPGGEPAATAATGAPASTQP). Polar residues predominate over residues 316–332 (PSQSPHGDVQDSASHSD). A helical membrane pass occupies residues 468-488 (IAWVIVAISVPISSCSVLLTV). The segment at 489–574 (CCMRRKKKTA…FVGNDQVSEI (86 aa)) is interaction with CYFIP2.

As to quaternary structure, interacts with DST (isoform 1). Interacts with SH3GL2. Interacts (via N-terminus) with CYFIP1 and CYFIP2; the interactions associate TMEM108 with the WAVE1 complex. Glycosylated. Expressed in the nervous system tissues, such as hippocampus and spinal cord, is barely detectable in peripheral tissues such as heart, lung, liver, kidney and muscle. In brain, highly expressed in dentate gyrus neurons and expressed in cortex, olfactory bulb, ammon's horn, cerebellum, hypothalamus and striatum.

The protein resides in the membrane. It is found in the postsynaptic density. It localises to the endosome membrane. The protein localises to the cell projection. Its subcellular location is the axon. The protein resides in the dendrite. It is found in the early endosome. Transmembrane protein required for proper cognitive functions. Involved in the development of dentate gyrus (DG) neuron circuitry, is necessary for AMPA receptors surface expression and proper excitatory postsynaptic currents of DG granule neurons. Regulates the organization and stability of the microtubule network of sensory neurons to allow axonal transport. Through the interaction with DST, mediates the docking of the dynein/dynactin motor complex to vesicle cargos for retrograde axonal transport. In hippocampal neurons, required for BDNF-dependent dendrite outgrowth. Cooperates with SH3GL2 and recruits the WAVE1 complex to facilitate actin-dependent BDNF:NTRK2 early endocytic trafficking and mediate signaling from early endosomes. In Mus musculus (Mouse), this protein is Transmembrane protein 108.